The sequence spans 421 residues: Histidine--tRNA ligase (421 aa).

Belongs to the class-II aminoacyl-tRNA synthetase family. Homodimer.

Its subcellular location is the cytoplasm. It catalyses the reaction tRNA(His) + L-histidine + ATP = L-histidyl-tRNA(His) + AMP + diphosphate + H(+). This Francisella tularensis subsp. holarctica (strain LVS) protein is Histidine--tRNA ligase.